Reading from the N-terminus, the 519-residue chain is Sensory neuron membrane protein 2 (519 aa).

The Cytoplasmic portion of the chain corresponds to methionine 1 to lysine 7. The helical transmembrane segment at leucine 8 to phenylalanine 28 threads the bilayer. At proline 29–glutamine 469 the chain is on the extracellular side. 7 N-linked (GlcNAc...) asparagine glycosylation sites follow: asparagine 44, asparagine 67, asparagine 104, asparagine 166, asparagine 229, asparagine 272, and asparagine 314. 3 cysteine pairs are disulfide-bonded: cysteine 268–cysteine 338, cysteine 299–cysteine 362, and cysteine 340–cysteine 351. Residues leucine 470–valine 490 form a helical membrane-spanning segment. Topologically, residues alanine 491–arginine 519 are cytoplasmic.

Belongs to the CD36 family. Localizes to both male and female antennae but not the leg, wing, gut, head or thoracic ganglia. Detected throughout the sensory epithelium, associating with both sex-pheromone sensilla and plant-volatile sensilla. Differentially expressed among different sensilla and different neurons within a given sensillum.

Its subcellular location is the cell membrane. Plays an olfactory role that is not restricted to pheromone sensitivity. This chain is Sensory neuron membrane protein 2, found in Manduca sexta (Tobacco hawkmoth).